Consider the following 464-residue polypeptide: tRNA-2-methylthio-N(6)-dimethylallyladenosine synthase (464 aa).

Residues 19–135 (GSYWITTFGC…LENLLERVDS (117 aa)) form the MTTase N-terminal domain. Cysteine 28, cysteine 64, cysteine 98, cysteine 170, cysteine 174, and cysteine 177 together coordinate [4Fe-4S] cluster. Positions 156–393 (RDSTICGWVN…NELVEATSRK (238 aa)) constitute a Radical SAM core domain. The TRAM domain occupies 396–464 (QRYLNNTESV…SFSLSGQIYK (69 aa)).

Belongs to the methylthiotransferase family. MiaB subfamily. As to quaternary structure, monomer. It depends on [4Fe-4S] cluster as a cofactor.

It localises to the cytoplasm. It catalyses the reaction N(6)-dimethylallyladenosine(37) in tRNA + (sulfur carrier)-SH + AH2 + 2 S-adenosyl-L-methionine = 2-methylsulfanyl-N(6)-dimethylallyladenosine(37) in tRNA + (sulfur carrier)-H + 5'-deoxyadenosine + L-methionine + A + S-adenosyl-L-homocysteine + 2 H(+). Functionally, catalyzes the methylthiolation of N6-(dimethylallyl)adenosine (i(6)A), leading to the formation of 2-methylthio-N6-(dimethylallyl)adenosine (ms(2)i(6)A) at position 37 in tRNAs that read codons beginning with uridine. The chain is tRNA-2-methylthio-N(6)-dimethylallyladenosine synthase from Prochlorococcus marinus (strain MIT 9515).